Here is a 497-residue protein sequence, read N- to C-terminus: Subtilisin-like protease CPC735_031240 (497 aa).

Residues M1 to P16 form the signal peptide. Positions S17–W136 are excised as a propeptide. Residues S43–H134 enclose the Inhibitor I9 domain. Residues P146–I452 enclose the Peptidase S8 domain. Active-site charge relay system residues include D182 and H214. N244 and N284 each carry an N-linked (GlcNAc...) asparagine glycan. S380 serves as the catalytic Charge relay system. The N-linked (GlcNAc...) asparagine glycan is linked to N447.

The protein belongs to the peptidase S8 family.

It is found in the secreted. In terms of biological role, secreted subtilisin-like serine protease with keratinolytic activity that contributes to pathogenicity. This is Subtilisin-like protease CPC735_031240 from Coccidioides posadasii (strain C735) (Valley fever fungus).